The primary structure comprises 560 residues: DNA ligase B (560 aa).

The active-site N6-AMP-lysine intermediate is Lys124.

Belongs to the NAD-dependent DNA ligase family. LigB subfamily.

It catalyses the reaction NAD(+) + (deoxyribonucleotide)n-3'-hydroxyl + 5'-phospho-(deoxyribonucleotide)m = (deoxyribonucleotide)n+m + AMP + beta-nicotinamide D-nucleotide.. In terms of biological role, catalyzes the formation of phosphodiester linkages between 5'-phosphoryl and 3'-hydroxyl groups in double-stranded DNA using NAD as a coenzyme and as the energy source for the reaction. This chain is DNA ligase B, found in Shigella flexneri.